A 63-amino-acid chain; its full sequence is Large ribosomal subunit protein uL29 (63 aa).

The protein belongs to the universal ribosomal protein uL29 family.

In Haemophilus ducreyi (strain 35000HP / ATCC 700724), this protein is Large ribosomal subunit protein uL29.